The following is a 522-amino-acid chain: UPF0288 protein MTH_1865 (522 aa).

It belongs to the UPF0288 family.

The protein is UPF0288 protein MTH_1865 of Methanothermobacter thermautotrophicus (strain ATCC 29096 / DSM 1053 / JCM 10044 / NBRC 100330 / Delta H) (Methanobacterium thermoautotrophicum).